The chain runs to 478 residues: ATP synthase subunit beta (478 aa).

Gly163–Thr170 serves as a coordination point for ATP.

It belongs to the ATPase alpha/beta chains family. In terms of assembly, F-type ATPases have 2 components, CF(1) - the catalytic core - and CF(0) - the membrane proton channel. CF(1) has five subunits: alpha(3), beta(3), gamma(1), delta(1), epsilon(1). CF(0) has three main subunits: a(1), b(2) and c(9-12). The alpha and beta chains form an alternating ring which encloses part of the gamma chain. CF(1) is attached to CF(0) by a central stalk formed by the gamma and epsilon chains, while a peripheral stalk is formed by the delta and b chains.

It localises to the cell inner membrane. It catalyses the reaction ATP + H2O + 4 H(+)(in) = ADP + phosphate + 5 H(+)(out). Its function is as follows. Produces ATP from ADP in the presence of a proton gradient across the membrane. The catalytic sites are hosted primarily by the beta subunits. The polypeptide is ATP synthase subunit beta (Aquifex pyrophilus).